Consider the following 344-residue polypeptide: Isopentenyl-diphosphate delta-isomerase (344 aa).

Residue 9–10 (RK) coordinates substrate. FMN-binding positions include 65-67 (AMT), S95, and N124. Q154 lines the substrate pocket. Position 155 (E155) interacts with Mg(2+). Residues K185, T215, 259–261 (GVR), and 280–281 (SG) each bind FMN.

This sequence belongs to the IPP isomerase type 2 family. In terms of assembly, homooctamer. Dimer of tetramers. It depends on FMN as a cofactor. The cofactor is NADPH. Mg(2+) serves as cofactor.

The protein localises to the cytoplasm. The catalysed reaction is isopentenyl diphosphate = dimethylallyl diphosphate. In terms of biological role, involved in the biosynthesis of isoprenoids. Catalyzes the 1,3-allylic rearrangement of the homoallylic substrate isopentenyl (IPP) to its allylic isomer, dimethylallyl diphosphate (DMAPP). In Lacticaseibacillus casei (strain BL23) (Lactobacillus casei), this protein is Isopentenyl-diphosphate delta-isomerase.